A 158-amino-acid chain; its full sequence is Transcriptional repressor NrdR (158 aa).

A zinc finger spans residues 3–34; it reads CPYCGYPDSKVIDSRPTDDNTSIRRRRECLKC. Residues 49–139 form the ATP-cone domain; the sequence is ILVIKKDNRR…VYRQFKDINT (91 aa).

This sequence belongs to the NrdR family. Requires Zn(2+) as cofactor.

Its function is as follows. Negatively regulates transcription of bacterial ribonucleotide reductase nrd genes and operons by binding to NrdR-boxes. This chain is Transcriptional repressor NrdR, found in Thermoanaerobacter pseudethanolicus (strain ATCC 33223 / 39E) (Clostridium thermohydrosulfuricum).